The sequence spans 97 residues: Co-chaperonin GroES (97 aa).

It belongs to the GroES chaperonin family. In terms of assembly, heptamer of 7 subunits arranged in a ring. Interacts with the chaperonin GroEL.

Its subcellular location is the cytoplasm. Functionally, together with the chaperonin GroEL, plays an essential role in assisting protein folding. The GroEL-GroES system forms a nano-cage that allows encapsulation of the non-native substrate proteins and provides a physical environment optimized to promote and accelerate protein folding. GroES binds to the apical surface of the GroEL ring, thereby capping the opening of the GroEL channel. This is Co-chaperonin GroES from Yersinia enterocolitica.